Reading from the N-terminus, the 200-residue chain is Shikimate kinase (200 aa).

ATP is bound at residue 41–46 (GVGKSS). A Mg(2+)-binding site is contributed by Ser45. 3 residues coordinate substrate: Asp63, Arg87, and Gly109. Residue Arg147 participates in ATP binding. Arg166 is a substrate binding site.

Belongs to the shikimate kinase family. As to quaternary structure, monomer. Mg(2+) is required as a cofactor.

Its subcellular location is the cytoplasm. The enzyme catalyses shikimate + ATP = 3-phosphoshikimate + ADP + H(+). It functions in the pathway metabolic intermediate biosynthesis; chorismate biosynthesis; chorismate from D-erythrose 4-phosphate and phosphoenolpyruvate: step 5/7. Functionally, catalyzes the specific phosphorylation of the 3-hydroxyl group of shikimic acid using ATP as a cosubstrate. This is Shikimate kinase from Caulobacter vibrioides (strain NA1000 / CB15N) (Caulobacter crescentus).